We begin with the raw amino-acid sequence, 365 residues long: Synapse-associated protein 1 (365 aa).

A disordered region spans residues 1 to 65 (MFGGLSSWLG…QPPTEDPQFL (65 aa)). Over residues 52–62 (EQQQQPPTEDP) the composition is skewed to low complexity. In terms of domain architecture, BSD spans 172–224 (VQFNFDFDQMYPVALVMLQEDELLSKMRFALVPKLVKEEVFWRNYFYRISLIK). Residues 237–259 (QASGKEEKSSNRDDNLPLTEAVR) are disordered. Basic and acidic residues predominate over residues 240–251 (GKEEKSSNRDDN). Phosphothreonine is present on Thr262. Ser283, Ser298, and Ser327 each carry phosphoserine. Residues 344 to 365 (VAESEKRDENWDKEIEKMLQES) form a disordered region. The span at 346 to 365 (ESEKRDENWDKEIEKMLQES) shows a compositional bias: basic and acidic residues.

In terms of assembly, interacts (via phosphorylated form and BSD domain) with AKT1; this interaction is enhanced in a mTORC2-mediated manner in response to epidermal growth factor (EGF) stimulation and activates AKT1. Post-translationally, phosphorylated. Phosphorylation increases in a mTORC2-mediated manner in response to epidermal growth factor (EGF) stimulation. In terms of tissue distribution, expressed in the liver, kidney, skeletal muscle and in white and brown adipose tissues. Expressed in the cortex, cerebellum, thalamus, hippocampus, braistem, olfactory bulb, spinal cord and striatum of the brain. Expressed in most neuropil regions containing glutamatergic synaptic terminals. Expressed in the CA1, CA2 and CA3 perikarya of the hippocampus. Expressed in neurons and Purkinje cells (at the protein level).

Its subcellular location is the cytoplasm. It is found in the perinuclear region. The protein resides in the golgi apparatus. The protein localises to the perikaryon. It localises to the cell projection. Its subcellular location is the axon. It is found in the dendrite. The protein resides in the growth cone. The protein localises to the presynaptic cell membrane. It localises to the postsynaptic cell membrane. Its subcellular location is the membrane. Functionally, plays a role in adipocyte differentiation by promoting mTORC2-mediated phosphorylation of AKT1 at 'Ser-473' after growth factor stimulation. The chain is Synapse-associated protein 1 from Mus musculus (Mouse).